Consider the following 241-residue polypeptide: Uridylate kinase (241 aa).

12-15 is an ATP binding site; the sequence is KISG. The involved in allosteric activation by GTP stretch occupies residues 20–25; it reads GDKGNG. Gly-54 is a binding site for UMP. Positions 55 and 59 each coordinate ATP. UMP-binding positions include Asp-74 and 135–142; that span reads TGNPYFST. ATP contacts are provided by Asn-163, Tyr-169, and Asp-172.

The protein belongs to the UMP kinase family. Homohexamer.

It is found in the cytoplasm. It carries out the reaction UMP + ATP = UDP + ADP. Its pathway is pyrimidine metabolism; CTP biosynthesis via de novo pathway; UDP from UMP (UMPK route): step 1/1. Allosterically activated by GTP. Inhibited by UTP. Functionally, catalyzes the reversible phosphorylation of UMP to UDP. The chain is Uridylate kinase from Lactobacillus acidophilus (strain ATCC 700396 / NCK56 / N2 / NCFM).